The chain runs to 184 residues: Adenylate kinase 1 (184 aa).

11–16 provides a ligand contact to ATP; that stretch reads GAGKGT. Positions 31 to 60 are NMP; sequence STGDILRQAMKEQTPLGIKAQSYVDSGELV. AMP is bound by residues T32, R37, 58-60, 86-89, and Q93; these read ELV and GFPR. Residues 127 to 133 are LID; sequence SRGRKDD. R128 is an ATP binding site. Positions 130 and 141 each coordinate AMP. Residue Q169 coordinates ATP.

Belongs to the adenylate kinase family. Monomer.

The protein resides in the cytoplasm. The enzyme catalyses AMP + ATP = 2 ADP. The protein operates within purine metabolism; AMP biosynthesis via salvage pathway; AMP from ADP: step 1/1. Catalyzes the reversible transfer of the terminal phosphate group between ATP and AMP. Plays an important role in cellular energy homeostasis and in adenine nucleotide metabolism. This Nostoc sp. (strain PCC 7120 / SAG 25.82 / UTEX 2576) protein is Adenylate kinase 1.